The following is a 309-amino-acid chain: Pyridoxal 5'-phosphate synthase subunit PDX1.3 (309 aa).

Position 1 is an N-acetylmethionine (Met1). Asp40 contacts D-ribose 5-phosphate. The active-site Schiff-base intermediate with D-ribose 5-phosphate is the Lys97. Gly169 serves as a coordination point for D-ribose 5-phosphate. Arg181 contributes to the D-glyceraldehyde 3-phosphate binding site. D-ribose 5-phosphate-binding positions include Gly230 and 251–252 (GS).

This sequence belongs to the PdxS/SNZ family. In terms of assembly, homodimer or heterodimer with PDX1.1 or PDX1.2. Interacts with PDX2. As to expression, expressed in cotyledons, rapidly dividing root stele tissues, stems, leaves, flowers, mature pollen, and siliques.

The protein resides in the cytoplasm. The protein localises to the cell membrane. It is found in the membrane. The enzyme catalyses aldehydo-D-ribose 5-phosphate + D-glyceraldehyde 3-phosphate + L-glutamine = pyridoxal 5'-phosphate + L-glutamate + phosphate + 3 H2O + H(+). It participates in cofactor biosynthesis; pyridoxal 5'-phosphate biosynthesis. Catalyzes the formation of pyridoxal 5'-phosphate from ribose 5-phosphate (RBP), glyceraldehyde 3-phosphate (G3P) and ammonia. The ammonia is provided by PDX2. Can also use ribulose 5-phosphate and dihydroxyacetone phosphate as substrates, resulting from enzyme-catalyzed isomerization of RBP and G3P, respectively. Also plays an indirect role in resistance to singlet oxygen-generating photosensitizers. The protein is Pyridoxal 5'-phosphate synthase subunit PDX1.3 (PDX13) of Arabidopsis thaliana (Mouse-ear cress).